Consider the following 425-residue polypeptide: L-lysine 2,3-aminomutase (425 aa).

Residues 113–325 enclose the Radical SAM core domain; that stretch reads HRYPDRVLLL…GLRGHTSGYA (213 aa). Positions 127, 131, and 134 each coordinate [4Fe-4S] cluster. Lys339 bears the N6-(pyridoxal phosphate)lysine mark.

Belongs to the radical SAM superfamily. KamA family. In terms of assembly, homotetramer. Requires [4Fe-4S] cluster as cofactor. It depends on pyridoxal 5'-phosphate as a cofactor.

It carries out the reaction L-lysine = (3S)-3,6-diaminohexanoate. It participates in amino-acid degradation; L-lysine degradation via acetate pathway. Its function is as follows. Catalyzes the interconversion of L-alpha-lysine and L-beta-lysine. This Fusobacterium nucleatum subsp. nucleatum (strain ATCC 25586 / DSM 15643 / BCRC 10681 / CIP 101130 / JCM 8532 / KCTC 2640 / LMG 13131 / VPI 4355) protein is L-lysine 2,3-aminomutase.